The chain runs to 522 residues: MEELQGYLEKDRSRQQPFLYPLLFQEYIYALAHDRGLNDSIFDKPVEVFGYDSKSSLALVKRLIIRIYQQNYFLSAVRSFNQNRFLGHHHNNFFYSHFDSQMISEGFAIIVEILFSLRLVSFFEKKEIKKFHHLRSIHSIFPFLEDKLLHLNYVSDILIPHPIHMEILVQILQCWIPDVPLLHFLRFFLHKYHNWNSFLITPKKSIYVFSKENQRLFRFLYNSYVSECEFLLVFLRKQSSYLRLTSFGLFIERRHFYVKIEHLHMQHLLFIVVCRDYFHGTLWFFKDPSMHYVRCQGKAILASKGTHLLMKKWKYNFVNLWQYYFHFWYQSYRIRINQLANYSFYFWGYLSSLLKNYSTVKNKMLENSFLIDTVTNKFEATVPVIFLIGSLSKAQFCTVSGHPISKPTWTDLSDSDIIERFGRMCRNLSHYHSGSSKKQGLYRIKYILRLSCARTLARKHKSTVRTFLXRLGSGLLEEFFTEXDQALSLILPKKIPFIFHGSHKKHIWYLDIIRMNDLVNHS.

The protein belongs to the intron maturase 2 family. MatK subfamily.

It is found in the plastid. The protein resides in the chloroplast. In terms of biological role, usually encoded in the trnK tRNA gene intron. Probably assists in splicing its own and other chloroplast group II introns. This chain is Maturase K, found in Tigridia pavonia (Mexican shell flower).